An 87-amino-acid polypeptide reads, in one-letter code: Small ribosomal subunit protein bS20 (87 aa).

This sequence belongs to the bacterial ribosomal protein bS20 family.

Binds directly to 16S ribosomal RNA. This Rhizorhabdus wittichii (strain DSM 6014 / CCUG 31198 / JCM 15750 / NBRC 105917 / EY 4224 / RW1) (Sphingomonas wittichii) protein is Small ribosomal subunit protein bS20.